Here is an 85-residue protein sequence, read N- to C-terminus: Homeobox protein knotted-1-like 8 (85 aa).

The 21-residue stretch at glutamate 1 to phenylalanine 21 folds into the ELK domain. Residues serine 22–alanine 85 constitute a DNA-binding region (homeobox; TALE-type).

The protein belongs to the TALE/KNOX homeobox family. In terms of tissue distribution, strongly expressed in ear inflorescence primordia and shoot meristem. Weakly expressed in embryos. Absent from leaves.

The protein resides in the nucleus. Its function is as follows. Probably binds to the DNA sequence 5'-TGAC-3'. In Zea mays (Maize), this protein is Homeobox protein knotted-1-like 8 (KNOX8).